Here is a 204-residue protein sequence, read N- to C-terminus: Holliday junction branch migration complex subunit RuvA (204 aa).

The domain I stretch occupies residues 1–63 (MIGKLSGKVD…EEHIHLYGFL (63 aa)). The tract at residues 64–142 (TLEEKIFFNL…KISSGSAIIK (79 aa)) is domain II. A flexible linker region spans residues 143–149 (ESLNIKN). The tract at residues 150 to 204 (ITPVASNEVIKALVNLGFSRFEAQNAVQGIITQNPEISIDELIKTALKNRNSNFS) is domain III.

It belongs to the RuvA family. Homotetramer. Forms an RuvA(8)-RuvB(12)-Holliday junction (HJ) complex. HJ DNA is sandwiched between 2 RuvA tetramers; dsDNA enters through RuvA and exits via RuvB. An RuvB hexamer assembles on each DNA strand where it exits the tetramer. Each RuvB hexamer is contacted by two RuvA subunits (via domain III) on 2 adjacent RuvB subunits; this complex drives branch migration. In the full resolvosome a probable DNA-RuvA(4)-RuvB(12)-RuvC(2) complex forms which resolves the HJ.

The protein localises to the cytoplasm. Functionally, the RuvA-RuvB-RuvC complex processes Holliday junction (HJ) DNA during genetic recombination and DNA repair, while the RuvA-RuvB complex plays an important role in the rescue of blocked DNA replication forks via replication fork reversal (RFR). RuvA specifically binds to HJ cruciform DNA, conferring on it an open structure. The RuvB hexamer acts as an ATP-dependent pump, pulling dsDNA into and through the RuvAB complex. HJ branch migration allows RuvC to scan DNA until it finds its consensus sequence, where it cleaves and resolves the cruciform DNA. This is Holliday junction branch migration complex subunit RuvA from Rickettsia rickettsii (strain Iowa).